We begin with the raw amino-acid sequence, 336 residues long: Isopentenyl-diphosphate delta-isomerase (336 aa).

Residue 5–6 (RK) coordinates substrate. Residues 60–62 (AMT), Ser-90, and Asn-117 contribute to the FMN site. Substrate is bound at residue Gln-147. Glu-148 is a Mg(2+) binding site. FMN-binding positions include Lys-179, Ser-204, Thr-209, 253–255 (GVR), and 274–275 (SR).

This sequence belongs to the IPP isomerase type 2 family. In terms of assembly, homooctamer. Dimer of tetramers. FMN is required as a cofactor. Requires NADPH as cofactor. Mg(2+) serves as cofactor.

The protein resides in the cytoplasm. It catalyses the reaction isopentenyl diphosphate = dimethylallyl diphosphate. Its function is as follows. Involved in the biosynthesis of isoprenoids. Catalyzes the 1,3-allylic rearrangement of the homoallylic substrate isopentenyl (IPP) to its allylic isomer, dimethylallyl diphosphate (DMAPP). This chain is Isopentenyl-diphosphate delta-isomerase, found in Streptococcus pneumoniae (strain 70585).